The sequence spans 157 residues: D-aminoacyl-tRNA deacylase (157 aa).

Positions 137–138 (GP) match the Gly-cisPro motif, important for rejection of L-amino acids motif.

It belongs to the DTD family. As to quaternary structure, homodimer.

The protein resides in the cytoplasm. It carries out the reaction glycyl-tRNA(Ala) + H2O = tRNA(Ala) + glycine + H(+). It catalyses the reaction a D-aminoacyl-tRNA + H2O = a tRNA + a D-alpha-amino acid + H(+). Its function is as follows. An aminoacyl-tRNA editing enzyme that deacylates mischarged D-aminoacyl-tRNAs. Also deacylates mischarged glycyl-tRNA(Ala), protecting cells against glycine mischarging by AlaRS. Acts via tRNA-based rather than protein-based catalysis; rejects L-amino acids rather than detecting D-amino acids in the active site. By recycling D-aminoacyl-tRNA to D-amino acids and free tRNA molecules, this enzyme counteracts the toxicity associated with the formation of D-aminoacyl-tRNA entities in vivo and helps enforce protein L-homochirality. This Roseiflexus castenholzii (strain DSM 13941 / HLO8) protein is D-aminoacyl-tRNA deacylase.